Consider the following 301-residue polypeptide: NADH-cytochrome b5 reductase 3 (301 aa).

Residue Gly-2 is the site of N-myristoyl glycine attachment. The FAD-binding FR-type domain maps to 40–152; it reads DIKYPLRLID…RGPNGLLVYQ (113 aa). An N6-acetyllysine modification is found at Lys-42. A Phosphotyrosine modification is found at Tyr-43. Lys-50 carries the post-translational modification N6-acetyllysine. Residues Arg-92, Pro-93, Tyr-94, Val-109, Lys-111, and Phe-114 each coordinate FAD. Lys-120 bears the N6-acetyllysine mark. 4 residues coordinate FAD: Lys-126, Met-127, Ser-128, and Thr-185.

The protein belongs to the flavoprotein pyridine nucleotide cytochrome reductase family. Component of a complex composed of cytochrome b5, NADH-cytochrome b5 reductase (CYB5R3) and MTARC2. Interacts with MTLN; the interaction is required to maintain cellular lipid composition and leads to stimulation of mitochondrial respiratory complex I activity. Requires FAD as cofactor.

Its subcellular location is the endoplasmic reticulum membrane. The protein localises to the mitochondrion outer membrane. It catalyses the reaction 2 Fe(III)-[cytochrome b5] + NADH = 2 Fe(II)-[cytochrome b5] + NAD(+) + H(+). Its function is as follows. Catalyzes the reduction of two molecules of cytochrome b5 using NADH as the electron donor. The protein is NADH-cytochrome b5 reductase 3 of Mus musculus (Mouse).